A 237-amino-acid polypeptide reads, in one-letter code: 6-carboxyhexanoate--CoA ligase (237 aa).

Belongs to the BioW family. In terms of assembly, homodimer. Mg(2+) is required as a cofactor.

It catalyses the reaction heptanedioate + ATP + CoA = 6-carboxyhexanoyl-CoA + AMP + diphosphate. It functions in the pathway metabolic intermediate metabolism; pimeloyl-CoA biosynthesis; pimeloyl-CoA from pimelate: step 1/1. In terms of biological role, catalyzes the transformation of pimelate into pimeloyl-CoA with concomitant hydrolysis of ATP to AMP. This chain is 6-carboxyhexanoate--CoA ligase, found in Methanocaldococcus jannaschii (strain ATCC 43067 / DSM 2661 / JAL-1 / JCM 10045 / NBRC 100440) (Methanococcus jannaschii).